A 459-amino-acid polypeptide reads, in one-letter code: Argininosuccinate lyase (459 aa).

The protein belongs to the lyase 1 family. Argininosuccinate lyase subfamily.

It localises to the cytoplasm. The catalysed reaction is 2-(N(omega)-L-arginino)succinate = fumarate + L-arginine. Its pathway is amino-acid biosynthesis; L-arginine biosynthesis; L-arginine from L-ornithine and carbamoyl phosphate: step 3/3. The sequence is that of Argininosuccinate lyase from Geobacillus thermodenitrificans (strain NG80-2).